A 331-amino-acid polypeptide reads, in one-letter code: Fructose-1,6-bisphosphatase class 1 (331 aa).

Residues E100, D120, L122, and D123 each contribute to the Mg(2+) site. Substrate-binding positions include 123–126 (DGSS), N216, Y243, 261–263 (YLY), and K273. E279 lines the Mg(2+) pocket.

The protein belongs to the FBPase class 1 family. As to quaternary structure, homotetramer. The cofactor is Mg(2+).

The protein resides in the cytoplasm. The catalysed reaction is beta-D-fructose 1,6-bisphosphate + H2O = beta-D-fructose 6-phosphate + phosphate. It functions in the pathway carbohydrate biosynthesis; gluconeogenesis. This Amoebophilus asiaticus (strain 5a2) protein is Fructose-1,6-bisphosphatase class 1.